Reading from the N-terminus, the 127-residue chain is Aspartate 1-decarboxylase (127 aa).

Ser-25 functions as the Schiff-base intermediate with substrate; via pyruvic acid in the catalytic mechanism. Ser-25 bears the Pyruvic acid (Ser) mark. Thr-57 provides a ligand contact to substrate. Catalysis depends on Tyr-58, which acts as the Proton donor. A substrate-binding site is contributed by 73–75 (GAA).

Belongs to the PanD family. As to quaternary structure, heterooctamer of four alpha and four beta subunits. Pyruvate is required as a cofactor. Is synthesized initially as an inactive proenzyme, which is activated by self-cleavage at a specific serine bond to produce a beta-subunit with a hydroxyl group at its C-terminus and an alpha-subunit with a pyruvoyl group at its N-terminus.

The protein resides in the cytoplasm. It catalyses the reaction L-aspartate + H(+) = beta-alanine + CO2. It functions in the pathway cofactor biosynthesis; (R)-pantothenate biosynthesis; beta-alanine from L-aspartate: step 1/1. In terms of biological role, catalyzes the pyruvoyl-dependent decarboxylation of aspartate to produce beta-alanine. This is Aspartate 1-decarboxylase from Listeria monocytogenes serovar 1/2a (strain ATCC BAA-679 / EGD-e).